Here is a 395-residue protein sequence, read N- to C-terminus: Chorismate synthase (395 aa).

Positions 40 and 46 each coordinate NADP(+). Positions 98–120 are disordered; sequence LPREGRNAPLSRPRPGHADLTGM. FMN-binding positions include 134–136, 256–257, G301, 316–320, and R342; these read RSS, QA, and KPIPS.

This sequence belongs to the chorismate synthase family. As to quaternary structure, homotetramer. FMNH2 serves as cofactor.

It carries out the reaction 5-O-(1-carboxyvinyl)-3-phosphoshikimate = chorismate + phosphate. It functions in the pathway metabolic intermediate biosynthesis; chorismate biosynthesis; chorismate from D-erythrose 4-phosphate and phosphoenolpyruvate: step 7/7. Functionally, catalyzes the anti-1,4-elimination of the C-3 phosphate and the C-6 proR hydrogen from 5-enolpyruvylshikimate-3-phosphate (EPSP) to yield chorismate, which is the branch point compound that serves as the starting substrate for the three terminal pathways of aromatic amino acid biosynthesis. This reaction introduces a second double bond into the aromatic ring system. The chain is Chorismate synthase from Bifidobacterium longum subsp. infantis (strain ATCC 15697 / DSM 20088 / JCM 1222 / NCTC 11817 / S12).